The chain runs to 684 residues: MTDTVVNRWMYPGDGPLQSNDKEQLQAGWSVHPGAQTDRQRKQEELTDEEKEIINRVIARAEKMETMEQERIGRLVDRLETMRKNVAGDGVNRCILCGEQLGMLGSACVVCEDCKKNVCTKCGVETSNNRPHPVWLCKICLEQREVWKRSGAWFFKGFPKQVLPQPMPIKKTKPQQPAGEPATQEQPTPESRHPARAPARGDMEDRRAPGQKPGPDLTSAPGRGSHGPPTRRASEARMSTTTRDSEGWDHGHGGGAGDTSRSPGGEQGLRRANSVQASRPAPASMPSPAPPQPVQPGPPGGSRAAPGPGRFPEQSTEAPPSDPGYPGAVAPAREERTGPTGGFQAAPHTAGPYSQAAPARQPPPAEEEEEEANSYDSDQATTLGALEFSLLYDQDNSNLQCTIIRAKGLKPMDSNGLADPYVKLHLLPGASKSNKLRTKTLRNTRNPVWNETLQYHGITEEDMQRKTLRISVCDEDKFGHNEFIGETRFSLKKLKANQRKNFNICLERVIPMKRAGTTGSARGMALYEEEQVERIGDIEERGKILVSLMYSTQQGGLIVGIIRCVHLAAMDANGYSDPFVKLWLKPDMGKKAKHKTQIKKKTLNPEFNEEFFYDIKHSDLAKKSLDISVWDYDIGKSNDYIGGCQLGISAKGERLKHWYECLKNKDKKIERWHQLQNENHVSSD.

A disordered region spans residues methionine 1–aspartate 21. The region spanning glutamine 40–glycine 157 is the RabBD domain. The FYVE-type zinc-finger motif lies at glycine 88–glutamate 145. Cysteine 94, cysteine 97, cysteine 111, cysteine 114, cysteine 119, cysteine 122, cysteine 137, and cysteine 140 together coordinate Zn(2+). The interval valine 162–serine 377 is disordered. The segment covering alanine 199–alanine 208 has biased composition (basic and acidic residues). Arginine 223 is subject to Omega-N-methylarginine. The segment covering arginine 243 to histidine 252 has biased composition (basic and acidic residues). Serine 274 carries the post-translational modification Phosphoserine. Over residues alanine 283 to proline 299 the composition is skewed to pro residues. Residues glycine 301–arginine 310 show a composition bias toward low complexity. The C2 1 domain occupies threonine 382–isoleucine 504. Residues methionine 412, aspartate 413, aspartate 419, aspartate 474, glutamate 475, aspartate 476, glutamate 482, glutamate 529, aspartate 571, aspartate 577, aspartate 631, tyrosine 632, aspartate 633, and aspartate 639 each contribute to the Ca(2+) site. A C2 2 domain is found at glutamate 540 to histidine 673. 2 positions are modified to phosphoserine: serine 682 and serine 683.

Interacts with RAB3B, RAB3C, RAB3D, RAB8A, RAB27A and RAB27B. Interacts with RAB3A; this interaction recruits RPH3A to synaptic vesicules. Interacts (via C2B domain) with SNAP25. Interacts with deubiquitinating enzyme CAND1; this interaction results in the deubiquitination of RPH3A. Interacts with GRIN2A and DLG4; this ternary complex regulates NMDA receptor composition at postsynaptic membranes. Interacts with SNCA. The cofactor is Ca(2+). Post-translationally, ubiquitinated. Deubiquitinated by CAND1 to prevent its degradation. Specifically expressed in brain.

It localises to the cytoplasmic vesicle. The protein localises to the secretory vesicle. It is found in the synaptic vesicle membrane. The protein resides in the cell projection. Its subcellular location is the dendritic spine. It localises to the postsynaptic cell membrane. The protein localises to the membrane. In terms of biological role, plays an essential role in docking and fusion steps of regulated exocytosis. At the presynaptic level, RPH3A is recruited by RAB3A to the synaptic vesicle membrane in a GTP-dependent manner where it modulates synaptic vesicle trafficking and calcium-triggered neurotransmitter release. In the post-synaptic compartment, forms a ternary complex with GRIN2A and DLG4 and regulates NMDA receptor stability. Also plays a role in the exocytosis of arginine vasopressin hormone. This Rattus norvegicus (Rat) protein is Rabphilin-3A (Rph3a).